Consider the following 1227-residue polypeptide: Protein U7 (1227 aa).

The protein belongs to the herpesviridae US22 family.

This chain is Protein U7 (U7/U5), found in Homo sapiens (Human).